Reading from the N-terminus, the 819-residue chain is THO complex subunit 5B (819 aa).

The disordered stretch occupies residues 285 to 332 (ARQQSRKDSGMSSNTESSRLEDDGPDDDDDGQRRRKRPKKLTSKEGSD).

It belongs to the THOC5 family. In terms of assembly, component of the THO complex, which is composed of THO1, THO2, THO3, THO5, THO6 and THO7.

It localises to the nucleus. Its function is as follows. Acts as a component of the THO subcomplex of the TREX complex which is thought to couple mRNA transcription, processing and nuclear export. The sequence is that of THO complex subunit 5B (THO5B) from Arabidopsis thaliana (Mouse-ear cress).